Consider the following 230-residue polypeptide: 2,3-bisphosphoglycerate-dependent phosphoglycerate mutase (230 aa).

Residues Arg-10–Asn-17, Thr-23–Gly-24, Arg-62, Glu-89–Tyr-92, Lys-100, Arg-116–Arg-117, and Gly-185–Asn-186 contribute to the substrate site. His-11 serves as the catalytic Tele-phosphohistidine intermediate. Glu-89 serves as the catalytic Proton donor/acceptor.

Belongs to the phosphoglycerate mutase family. BPG-dependent PGAM subfamily. In terms of assembly, homodimer.

It carries out the reaction (2R)-2-phosphoglycerate = (2R)-3-phosphoglycerate. It participates in carbohydrate degradation; glycolysis; pyruvate from D-glyceraldehyde 3-phosphate: step 3/5. Catalyzes the interconversion of 2-phosphoglycerate and 3-phosphoglycerate. This Buchnera aphidicola subsp. Cinara cedri (strain Cc) protein is 2,3-bisphosphoglycerate-dependent phosphoglycerate mutase.